Consider the following 130-residue polypeptide: Small ribosomal subunit protein uS9 (130 aa).

The disordered stretch occupies residues 109-130 (RAKERKKYGLKAARRAPQFSKR). Residues 111-130 (KERKKYGLKAARRAPQFSKR) show a composition bias toward basic residues.

It belongs to the universal ribosomal protein uS9 family.

The protein is Small ribosomal subunit protein uS9 of Heliobacterium modesticaldum (strain ATCC 51547 / Ice1).